The chain runs to 87 residues: Small ribosomal subunit protein uS17 (87 aa).

The protein belongs to the universal ribosomal protein uS17 family. In terms of assembly, part of the 30S ribosomal subunit.

Its function is as follows. One of the primary rRNA binding proteins, it binds specifically to the 5'-end of 16S ribosomal RNA. The chain is Small ribosomal subunit protein uS17 from Aster yellows witches'-broom phytoplasma (strain AYWB).